A 329-amino-acid polypeptide reads, in one-letter code: MTQLFYDTDADLSLLNNKTIAIIGYGSQGHAHALNLKDSGMDVIVGLYKGSKSESKAISDGLQVFSVSEACEKADWIMILLPDEFQKDVYLKEIEPNLKEGKILSFAHGFNIRFGLIKPPSFVDVVMIAPKGPGHTVRWEYQNGQGVPALFAVEQDSSGNARSLAMAYAKGIGGTRAGILETNFKEETETDLFGEQAVLCGGLSELVKSGFETLVEAGYQPELAYFECLHEVKLIVDLMVKGGLSQMRDSISNTAEYGDYVSGKRLINSDTKKEMQKILKDIQDGTFAKNFVEECDKNKPLMTKLREENSKHEIEKVGKGLRSMFSWLK.

The KARI N-terminal Rossmann domain occupies 2-182 (TQLFYDTDAD…GGTRAGILET (181 aa)). Residues 25 to 28 (YGSQ), Ser51, Ser53, and 83 to 86 (DEFQ) contribute to the NADP(+) site. Residue His108 is part of the active site. Gly134 is an NADP(+) binding site. One can recognise a KARI C-terminal knotted domain in the interval 183–328 (NFKEETETDL…KGLRSMFSWL (146 aa)). Asp191, Glu195, Glu227, and Glu231 together coordinate Mg(2+). Residue Ser252 participates in substrate binding.

The protein belongs to the ketol-acid reductoisomerase family. Mg(2+) serves as cofactor.

The enzyme catalyses (2R)-2,3-dihydroxy-3-methylbutanoate + NADP(+) = (2S)-2-acetolactate + NADPH + H(+). The catalysed reaction is (2R,3R)-2,3-dihydroxy-3-methylpentanoate + NADP(+) = (S)-2-ethyl-2-hydroxy-3-oxobutanoate + NADPH + H(+). The protein operates within amino-acid biosynthesis; L-isoleucine biosynthesis; L-isoleucine from 2-oxobutanoate: step 2/4. It functions in the pathway amino-acid biosynthesis; L-valine biosynthesis; L-valine from pyruvate: step 2/4. Its function is as follows. Involved in the biosynthesis of branched-chain amino acids (BCAA). Catalyzes an alkyl-migration followed by a ketol-acid reduction of (S)-2-acetolactate (S2AL) to yield (R)-2,3-dihydroxy-isovalerate. In the isomerase reaction, S2AL is rearranged via a Mg-dependent methyl migration to produce 3-hydroxy-3-methyl-2-ketobutyrate (HMKB). In the reductase reaction, this 2-ketoacid undergoes a metal-dependent reduction by NADPH to yield (R)-2,3-dihydroxy-isovalerate. This chain is Ketol-acid reductoisomerase (NADP(+)), found in Prochlorococcus marinus (strain AS9601).